Here is a 102-residue protein sequence, read N- to C-terminus: Large ribosomal subunit protein bL21 (102 aa).

This sequence belongs to the bacterial ribosomal protein bL21 family. As to quaternary structure, part of the 50S ribosomal subunit. Contacts protein L20.

In terms of biological role, this protein binds to 23S rRNA in the presence of protein L20. This Onion yellows phytoplasma (strain OY-M) protein is Large ribosomal subunit protein bL21.